Here is a 311-residue protein sequence, read N- to C-terminus: Cytosolic Fe-S cluster assembly factor Nubp1 homolog (311 aa).

Residues cysteine 9, cysteine 23, cysteine 26, and cysteine 32 each contribute to the [4Fe-4S] cluster site. Residue glycine 63–serine 70 participates in ATP binding. Positions 241 and 244 each coordinate [4Fe-4S] cluster.

This sequence belongs to the Mrp/NBP35 ATP-binding proteins family. NUBP1/NBP35 subfamily. As to quaternary structure, heterotetramer of 2 Nubp1 and 2 Nubp2 chains. Requires [4Fe-4S] cluster as cofactor.

It localises to the cytoplasm. Its function is as follows. Component of the cytosolic iron-sulfur (Fe/S) protein assembly (CIA) machinery. Required for maturation of extramitochondrial Fe-S proteins. The Nubp1-Nubp2 heterotetramer forms a Fe-S scaffold complex, mediating the de novo assembly of an Fe-S cluster and its transfer to target apoproteins. This is Cytosolic Fe-S cluster assembly factor Nubp1 homolog from Drosophila grimshawi (Hawaiian fruit fly).